The primary structure comprises 243 residues: Ribonuclease PH (243 aa).

Residues arginine 91 and 129–131 (GTR) each bind phosphate.

It belongs to the RNase PH family. In terms of assembly, homohexameric ring arranged as a trimer of dimers.

The enzyme catalyses tRNA(n+1) + phosphate = tRNA(n) + a ribonucleoside 5'-diphosphate. Phosphorolytic 3'-5' exoribonuclease that plays an important role in tRNA 3'-end maturation. Removes nucleotide residues following the 3'-CCA terminus of tRNAs; can also add nucleotides to the ends of RNA molecules by using nucleoside diphosphates as substrates, but this may not be physiologically important. Probably plays a role in initiation of 16S rRNA degradation (leading to ribosome degradation) during starvation. This Burkholderia pseudomallei (strain 668) protein is Ribonuclease PH.